The following is a 95-amino-acid chain: Aspartyl/glutamyl-tRNA(Asn/Gln) amidotransferase subunit C (95 aa).

The protein belongs to the GatC family. In terms of assembly, heterotrimer of A, B and C subunits.

It carries out the reaction L-glutamyl-tRNA(Gln) + L-glutamine + ATP + H2O = L-glutaminyl-tRNA(Gln) + L-glutamate + ADP + phosphate + H(+). It catalyses the reaction L-aspartyl-tRNA(Asn) + L-glutamine + ATP + H2O = L-asparaginyl-tRNA(Asn) + L-glutamate + ADP + phosphate + 2 H(+). Allows the formation of correctly charged Asn-tRNA(Asn) or Gln-tRNA(Gln) through the transamidation of misacylated Asp-tRNA(Asn) or Glu-tRNA(Gln) in organisms which lack either or both of asparaginyl-tRNA or glutaminyl-tRNA synthetases. The reaction takes place in the presence of glutamine and ATP through an activated phospho-Asp-tRNA(Asn) or phospho-Glu-tRNA(Gln). This chain is Aspartyl/glutamyl-tRNA(Asn/Gln) amidotransferase subunit C, found in Phenylobacterium zucineum (strain HLK1).